Consider the following 257-residue polypeptide: Snake venom serine protease KN10 (257 aa).

A signal peptide spans 1-18; sequence MVLIRVLANLLILQLSYA. The propeptide occupies 19-24; it reads QKSSEL. The region spanning 25–248 is the Peptidase S1 domain; sequence VVGGDECNIN…HLDWIKSIIA (224 aa). Cystine bridges form between Cys31-Cys162, Cys49-Cys65, Cys141-Cys209, Cys173-Cys188, and Cys199-Cys224. His64 (charge relay system) is an active-site residue. Asn102 carries an N-linked (GlcNAc...) asparagine glycan. Residue Asp109 is the Charge relay system of the active site. Residues Asn120 and Asn121 are each glycosylated (N-linked (GlcNAc...) asparagine). The Charge relay system role is filled by Ser203.

The protein belongs to the peptidase S1 family. Snake venom subfamily. As to quaternary structure, monomer. As to expression, expressed by the venom gland.

It localises to the secreted. In terms of biological role, snake venom serine protease that may act in the hemostasis system of the prey. This Trimeresurus stejnegeri (Chinese green tree viper) protein is Snake venom serine protease KN10.